The primary structure comprises 219 residues: Uracil-DNA glycosylase (219 aa).

The active-site Proton acceptor is Asp61.

The protein belongs to the uracil-DNA glycosylase (UDG) superfamily. UNG family.

The protein resides in the cytoplasm. The catalysed reaction is Hydrolyzes single-stranded DNA or mismatched double-stranded DNA and polynucleotides, releasing free uracil.. In terms of biological role, excises uracil residues from the DNA which can arise as a result of misincorporation of dUMP residues by DNA polymerase or due to deamination of cytosine. This chain is Uracil-DNA glycosylase, found in Neisseria gonorrhoeae (strain ATCC 700825 / FA 1090).